Here is a 214-residue protein sequence, read N- to C-terminus: Probable transaldolase (214 aa).

K83 acts as the Schiff-base intermediate with substrate in catalysis.

Belongs to the transaldolase family. Type 3B subfamily.

The protein localises to the cytoplasm. The enzyme catalyses D-sedoheptulose 7-phosphate + D-glyceraldehyde 3-phosphate = D-erythrose 4-phosphate + beta-D-fructose 6-phosphate. It functions in the pathway carbohydrate degradation; pentose phosphate pathway; D-glyceraldehyde 3-phosphate and beta-D-fructose 6-phosphate from D-ribose 5-phosphate and D-xylulose 5-phosphate (non-oxidative stage): step 2/3. Transaldolase is important for the balance of metabolites in the pentose-phosphate pathway. The polypeptide is Probable transaldolase (Geotalea daltonii (strain DSM 22248 / JCM 15807 / FRC-32) (Geobacter daltonii)).